The primary structure comprises 368 residues: Methylthioribose-1-phosphate isomerase (368 aa).

Residues 54-56 (RGA), arginine 91, and glutamine 204 contribute to the substrate site. The active-site Proton donor is aspartate 245. 255 to 256 (NK) contributes to the substrate binding site.

The protein belongs to the eIF-2B alpha/beta/delta subunits family. MtnA subfamily.

It carries out the reaction 5-(methylsulfanyl)-alpha-D-ribose 1-phosphate = 5-(methylsulfanyl)-D-ribulose 1-phosphate. It participates in amino-acid biosynthesis; L-methionine biosynthesis via salvage pathway; L-methionine from S-methyl-5-thio-alpha-D-ribose 1-phosphate: step 1/6. Functionally, catalyzes the interconversion of methylthioribose-1-phosphate (MTR-1-P) into methylthioribulose-1-phosphate (MTRu-1-P). The protein is Methylthioribose-1-phosphate isomerase of Gluconobacter oxydans (strain 621H) (Gluconobacter suboxydans).